Here is a 416-residue protein sequence, read N- to C-terminus: tRNA(Met) cytidine acetate ligase (416 aa).

Residues Val-7 to Leu-20, Gly-102, Asn-166, and Arg-191 each bind ATP.

This sequence belongs to the TmcAL family.

The protein localises to the cytoplasm. It catalyses the reaction cytidine(34) in elongator tRNA(Met) + acetate + ATP = N(4)-acetylcytidine(34) in elongator tRNA(Met) + AMP + diphosphate. Its function is as follows. Catalyzes the formation of N(4)-acetylcytidine (ac(4)C) at the wobble position of elongator tRNA(Met), using acetate and ATP as substrates. First activates an acetate ion to form acetyladenylate (Ac-AMP) and then transfers the acetyl group to tRNA to form ac(4)C34. In Syntrophomonas wolfei subsp. wolfei (strain DSM 2245B / Goettingen), this protein is tRNA(Met) cytidine acetate ligase.